Here is a 336-residue protein sequence, read N- to C-terminus: Dihydroorotate dehydrogenase (quinone) (336 aa).

Residues 62–66 (AGLEK) and T86 each bind FMN. K66 contacts substrate. Residue 111–115 (NRMGF) coordinates substrate. The FMN site is built by N139 and N172. N172 serves as a coordination point for substrate. S175 (nucleophile) is an active-site residue. N177 contacts substrate. Residues K217 and T245 each coordinate FMN. 246-247 (NT) provides a ligand contact to substrate. FMN-binding positions include G268, G297, and 318–319 (YS).

This sequence belongs to the dihydroorotate dehydrogenase family. Type 2 subfamily. In terms of assembly, monomer. It depends on FMN as a cofactor.

The protein localises to the cell membrane. It carries out the reaction (S)-dihydroorotate + a quinone = orotate + a quinol. Its pathway is pyrimidine metabolism; UMP biosynthesis via de novo pathway; orotate from (S)-dihydroorotate (quinone route): step 1/1. In terms of biological role, catalyzes the conversion of dihydroorotate to orotate with quinone as electron acceptor. In Aliivibrio salmonicida (strain LFI1238) (Vibrio salmonicida (strain LFI1238)), this protein is Dihydroorotate dehydrogenase (quinone).